The following is a 480-amino-acid chain: UDP-glucose 6-dehydrogenase 2 (480 aa).

NAD(+) is bound by residues Gly8 to Gly13, Asp33, Arg38, Val86 to Thr90, Ser127 to Thr128, and Glu161. Substrate-binding positions include Glu157 to Glu161, Lys216 to Leu223, and Arg256 to Gly269. Residue Cys272 is the Nucleophile of the active site. Residue Cys272–Lys275 participates in NAD(+) binding. Position 334 to 335 (Phe334 to Lys335) interacts with substrate. Arg342 lines the NAD(+) pocket. Arg447 is a binding site for substrate.

This sequence belongs to the UDP-glucose/GDP-mannose dehydrogenase family. As to expression, preferentially expressed in roots.

It carries out the reaction UDP-alpha-D-glucose + 2 NAD(+) + H2O = UDP-alpha-D-glucuronate + 2 NADH + 3 H(+). It functions in the pathway nucleotide-sugar biosynthesis; UDP-alpha-D-glucuronate biosynthesis; UDP-alpha-D-glucuronate from UDP-alpha-D-glucose: step 1/1. Inhibited by UDP-xylose. In terms of biological role, involved in the biosynthesis of UDP-glucuronic acid (UDP-GlcA), providing nucleotide sugars for cell-wall polymers. Required for the formation of cell wall ingrowths on the outer cell walls of nematode-induced syncytia. This chain is UDP-glucose 6-dehydrogenase 2 (UGD2), found in Arabidopsis thaliana (Mouse-ear cress).